The chain runs to 318 residues: Ferredoxin--NADP reductase (318 aa).

Residues Asp-33, Gln-41, Tyr-46, Val-84, Phe-115, Asp-276, and Thr-316 each coordinate FAD.

The protein belongs to the ferredoxin--NADP reductase type 2 family. Homodimer. It depends on FAD as a cofactor.

The enzyme catalyses 2 reduced [2Fe-2S]-[ferredoxin] + NADP(+) + H(+) = 2 oxidized [2Fe-2S]-[ferredoxin] + NADPH. The chain is Ferredoxin--NADP reductase from Lactobacillus gasseri (strain ATCC 33323 / DSM 20243 / BCRC 14619 / CIP 102991 / JCM 1131 / KCTC 3163 / NCIMB 11718 / NCTC 13722 / AM63).